The sequence spans 200 residues: HTH-type transcriptional regulator Hpr (200 aa).

Residues 13–157 (AMLFSQRIAQ…MMCIVRNIYG (145 aa)) form the HTH marR-type domain. The segment at residues 63 to 86 (ISEIAKFGVMHVSTAFNFSKKLEE) is a DNA-binding region (H-T-H motif).

Homodimer.

Its function is as follows. Negative regulator of protease production and sporulation. The chain is HTH-type transcriptional regulator Hpr from Geobacillus thermodenitrificans (strain NG80-2).